The primary structure comprises 434 residues: N-lysine methyltransferase SMYD2-B (434 aa).

In terms of domain architecture, SET spans Pro8–Ile242. Lys18–Arg20 is an S-adenosyl-L-methionine binding site. Zn(2+) contacts are provided by Cys53, Cys56, Cys66, Cys69, Cys75, Cys79, His87, and Cys91. Residues Cys53 to Cys91 form an MYND-type zinc finger. S-adenosyl-L-methionine-binding positions include His138, Asn207–His208, and Tyr259–Phe261.

The protein belongs to the class V-like SAM-binding methyltransferase superfamily.

The protein localises to the cytoplasm. It localises to the cytosol. Its subcellular location is the nucleus. It catalyses the reaction L-lysyl(4)-[histone H3] + 3 S-adenosyl-L-methionine = N(6),N(6),N(6)-trimethyl-L-lysyl(4)-[histone H3] + 3 S-adenosyl-L-homocysteine + 3 H(+). The enzyme catalyses L-lysyl-[protein] + S-adenosyl-L-methionine = N(6)-methyl-L-lysyl-[protein] + S-adenosyl-L-homocysteine + H(+). Protein-lysine N-methyltransferase that methylates both histones and non-histone proteins, including p53/TP53 and RB1. Specifically trimethylates histone H3 'Lys-4' (H3K4me3) in vivo. The activity requires interaction with HSP90alpha. Shows even higher methyltransferase activity on p53/TP53. Monomethylates 'Lys-370' of p53/TP53, leading to decreased DNA-binding activity and subsequent transcriptional regulation activity of p53/TP53. Monomethylates RB1 at 'Lys-860'. The polypeptide is N-lysine methyltransferase SMYD2-B (smyd2b) (Danio rerio (Zebrafish)).